A 503-amino-acid polypeptide reads, in one-letter code: Zinc finger and BTB domain-containing protein 37 (503 aa).

Positions 32–96 (CDIVVNVQGQ…CYTGRICLQL (65 aa)) constitute a BTB domain. Disordered stretches follow at residues 140–206 (QTRT…SDVE) and 280–344 (GHGS…QVEE). Residues 144–154 (KHQERPPESHR) show a composition bias toward basic and acidic residues. Residues 155–167 (VTPNLNRSLSPRH) are compositionally biased toward polar residues. The segment covering 319–336 (TERHRARSESPGRMDEPK) has biased composition (basic and acidic residues). 3 C2H2-type zinc fingers span residues 373-395 (LTCIYCAKSFNQKGSLDRHMRLH), 401-423 (FVCRMCGKKYTRKDQLEYHIRKH), and 429-452 (FHCHVCGKSFPFQAILNQHFRKNH). Positions 457–503 (PLEGPHSISPETTVTSRGQAEEESPSQEETVAPGEAVQGSVSTTGPD) are disordered. Polar residues predominate over residues 465 to 474 (SPETTVTSRG).

The protein localises to the nucleus. Its function is as follows. May be involved in transcriptional regulation. The chain is Zinc finger and BTB domain-containing protein 37 (ZBTB37) from Homo sapiens (Human).